The chain runs to 220 residues: Urease accessory protein UreF (220 aa).

The protein belongs to the UreF family. As to quaternary structure, ureD, UreF and UreG form a complex that acts as a GTP-hydrolysis-dependent molecular chaperone, activating the urease apoprotein by helping to assemble the nickel containing metallocenter of UreC. The UreE protein probably delivers the nickel.

It is found in the cytoplasm. In terms of biological role, required for maturation of urease via the functional incorporation of the urease nickel metallocenter. The sequence is that of Urease accessory protein UreF from Jannaschia sp. (strain CCS1).